Here is a 449-residue protein sequence, read N- to C-terminus: Tryptophan--tRNA ligase (449 aa).

ATP is bound by residues Thr-10–Thr-12 and Gly-18–Asn-19. Positions Thr-11–Asn-19 match the 'HIGH' region motif. Asp-143 contributes to the L-tryptophan binding site. ATP is bound by residues Gly-155 to Asp-157, Leu-197, and Lys-204 to Ser-208. The short motif at Lys-204–Ser-208 is the 'KMSKS' region element.

Belongs to the class-I aminoacyl-tRNA synthetase family. As to quaternary structure, homodimer.

It is found in the cytoplasm. The catalysed reaction is tRNA(Trp) + L-tryptophan + ATP = L-tryptophyl-tRNA(Trp) + AMP + diphosphate + H(+). Its function is as follows. Catalyzes the attachment of tryptophan to tRNA(Trp). This chain is Tryptophan--tRNA ligase, found in Pseudomonas syringae pv. tomato (strain ATCC BAA-871 / DC3000).